Here is a 117-residue protein sequence, read N- to C-terminus: Fluoride-specific ion channel FluC 2 (117 aa).

4 consecutive transmembrane segments (helical) span residues methionine 1–isoleucine 21, isoleucine 33–glycine 53, methionine 61–serine 81, and isoleucine 94–glycine 114. 2 residues coordinate Na(+): glycine 71 and threonine 74.

The protein belongs to the fluoride channel Fluc/FEX (TC 1.A.43) family.

The protein localises to the cell membrane. The enzyme catalyses fluoride(in) = fluoride(out). With respect to regulation, na(+) is not transported, but it plays an essential structural role and its presence is essential for fluoride channel function. In terms of biological role, fluoride-specific ion channel. Important for reducing fluoride concentration in the cell, thus reducing its toxicity. The sequence is that of Fluoride-specific ion channel FluC 2 from Staphylococcus epidermidis (strain ATCC 35984 / DSM 28319 / BCRC 17069 / CCUG 31568 / BM 3577 / RP62A).